Reading from the N-terminus, the 74-residue chain is Putative protein YozX (74 aa).

The protein is Putative protein YozX (yozX) of Bacillus subtilis (strain 168).